A 370-amino-acid chain; its full sequence is Cytochrome b (370 aa).

The next 4 helical transmembrane spans lie at 25-45 (FGSM…FLAV), 69-90 (WLMQ…YIHI), 105-125 (WLSG…GYVL), and 170-190 (FFAL…LHVI). Histidine 75 and histidine 89 together coordinate heme b. Heme b is bound by residues histidine 174 and histidine 188. Position 193 (histidine 193) interacts with a ubiquinone. The next 4 membrane-spanning stretches (helical) occupy residues 218–238 (YKDL…VSFS), 280–300 (LGGA…PFTH), 312–332 (FMQM…WTAT), and 339–358 (FTLI…ISNP).

Belongs to the cytochrome b family. The cytochrome bc1 complex contains 3 respiratory subunits (MT-CYB, CYC1 and UQCRFS1), 2 core proteins (UQCRC1 and UQCRC2) and probably 6 low-molecular weight proteins. Heme b is required as a cofactor.

It is found in the mitochondrion inner membrane. Functionally, component of the ubiquinol-cytochrome c reductase complex (complex III or cytochrome b-c1 complex) that is part of the mitochondrial respiratory chain. The b-c1 complex mediates electron transfer from ubiquinol to cytochrome c. Contributes to the generation of a proton gradient across the mitochondrial membrane that is then used for ATP synthesis. The polypeptide is Cytochrome b (MT-CYB) (Eunectes murinus (Green anaconda)).